The sequence spans 275 residues: Tryptophan synthase alpha chain (275 aa).

Active-site proton acceptor residues include glutamate 58 and aspartate 69.

The protein belongs to the TrpA family. As to quaternary structure, tetramer of two alpha and two beta chains. As to expression, ubiquitously expressed at low levels in seedlings, roots, hypocotyls, cotyledons, stems, leaves, inflorescences, flowers, siliques and seeds.

It is found in the cytoplasm. The enzyme catalyses (1S,2R)-1-C-(indol-3-yl)glycerol 3-phosphate + L-serine = D-glyceraldehyde 3-phosphate + L-tryptophan + H2O. The catalysed reaction is (1S,2R)-1-C-(indol-3-yl)glycerol 3-phosphate = indole + D-glyceraldehyde 3-phosphate. It functions in the pathway amino-acid biosynthesis; L-tryptophan biosynthesis; L-tryptophan from chorismate: step 5/5. In terms of biological role, the alpha subunit is responsible for the aldol cleavage of indoleglycerol phosphate to indole and glyceraldehyde 3-phosphate. Contributes to the tryptophan-independent indole biosynthesis, and possibly to auxin production. This Arabidopsis thaliana (Mouse-ear cress) protein is Tryptophan synthase alpha chain (TRPA1).